We begin with the raw amino-acid sequence, 150 residues long: Ventricular natriuretic peptide (150 aa).

The N-terminal stretch at 1-21 (MAKSGIYLGCFILILIQNMVA) is a signal peptide. The tract at residues 52 to 75 (EEPEVYPESEDMKMDAEEEDAGIS) is disordered. Cys-120 and Cys-136 are joined by a disulfide.

This sequence belongs to the natriuretic peptide family. In terms of tissue distribution, heart ventricle, and to a lower extent in heart atrium.

The protein resides in the secreted. Functionally, exhibits natriuretic and vasodepressor activity. The protein is Ventricular natriuretic peptide (vnp) of Anguilla japonica (Japanese eel).